The primary structure comprises 414 residues: Isocitrate dehydrogenase [NADP] cytoplasmic (414 aa).

S2 bears the N-acetylserine mark. Phosphotyrosine is present on Y42. T75–T77 is a binding site for NADP(+). Position 77 (T77) interacts with substrate. K81 carries the N6-acetyllysine modification. R82 provides a ligand contact to NADP(+). Substrate contacts are provided by residues S94–R100 and R109. K126 bears the N6-succinyllysine mark. 2 residues coordinate substrate: R132 and K212. Residues K224, K233, and K243 each carry the N6-acetyllysine modification. D252 contributes to the Mn(2+) binding site. K260 contacts NADP(+). Mn(2+)-binding residues include D275 and D279. An NADP(+)-binding site is contributed by G310–H315. K321 carries the N6-acetyllysine modification. N328 provides a ligand contact to NADP(+). The residue at position 389 (S389) is a Phosphoserine. The residue at position 400 (K400) is an N6-succinyllysine.

This sequence belongs to the isocitrate and isopropylmalate dehydrogenases family. In terms of assembly, homodimer. The cofactor is Mg(2+). Mn(2+) serves as cofactor. Acetylation at Lys-374 dramatically reduces catalytic activity.

The protein localises to the cytoplasm. It localises to the cytosol. The catalysed reaction is D-threo-isocitrate + NADP(+) = 2-oxoglutarate + CO2 + NADPH. In terms of biological role, catalyzes the NADP(+)-dependent oxidative decarboxylation of isocitrate (D-threo-isocitrate) to 2-ketoglutarate (2-oxoglutarate), which is required by other enzymes such as the phytanoyl-CoA dioxygenase. Plays a critical role in the generation of NADPH, an important cofactor in many biosynthesis pathways. May act as a corneal epithelial crystallin and may be involved in maintaining corneal epithelial transparency. The chain is Isocitrate dehydrogenase [NADP] cytoplasmic (IDH1) from Microtus ochrogaster (Prairie vole).